The following is a 357-amino-acid chain: DNA polymerase IV (357 aa).

Residues 4–185 (IIHVDMDCYF…LSLRQIPGVG (182 aa)) enclose the UmuC domain. Residues aspartate 8 and aspartate 103 each contribute to the Mg(2+) site. Glutamate 104 is an active-site residue.

Belongs to the DNA polymerase type-Y family. Monomer. It depends on Mg(2+) as a cofactor.

The protein resides in the cytoplasm. The catalysed reaction is DNA(n) + a 2'-deoxyribonucleoside 5'-triphosphate = DNA(n+1) + diphosphate. Its function is as follows. Poorly processive, error-prone DNA polymerase involved in untargeted mutagenesis. Copies undamaged DNA at stalled replication forks, which arise in vivo from mismatched or misaligned primer ends. These misaligned primers can be extended by PolIV. Exhibits no 3'-5' exonuclease (proofreading) activity. May be involved in translesional synthesis, in conjunction with the beta clamp from PolIII. In Shewanella oneidensis (strain ATCC 700550 / JCM 31522 / CIP 106686 / LMG 19005 / NCIMB 14063 / MR-1), this protein is DNA polymerase IV.